Consider the following 282-residue polypeptide: DegV domain-containing protein SPy_0865/M5005_Spy0672 (282 aa).

The DegV domain maps to 3-280 (LAVITDSTAT…EGAIAFGVTP (278 aa)). Hexadecanoate contacts are provided by Thr61 and Ser94.

May bind long-chain fatty acids, such as palmitate, and may play a role in lipid transport or fatty acid metabolism. In Streptococcus pyogenes serotype M1, this protein is DegV domain-containing protein SPy_0865/M5005_Spy0672.